The sequence spans 785 residues: Endonuclease MutS2 (785 aa).

ATP is bound at residue 335-342 (GPNTGGKT). The 76-residue stretch at 710-785 (LDLRGERYED…GNGVTIVEFK (76 aa)) folds into the Smr domain.

This sequence belongs to the DNA mismatch repair MutS family. MutS2 subfamily. Homodimer. Binds to stalled ribosomes, contacting rRNA.

Functionally, endonuclease that is involved in the suppression of homologous recombination and thus may have a key role in the control of bacterial genetic diversity. Acts as a ribosome collision sensor, splitting the ribosome into its 2 subunits. Detects stalled/collided 70S ribosomes which it binds and splits by an ATP-hydrolysis driven conformational change. Acts upstream of the ribosome quality control system (RQC), a ribosome-associated complex that mediates the extraction of incompletely synthesized nascent chains from stalled ribosomes and their subsequent degradation. Probably generates substrates for RQC. This is Endonuclease MutS2 from Listeria monocytogenes serotype 4b (strain CLIP80459).